The chain runs to 768 residues: Probable beta-glucosidase M (768 aa).

Positions 1-19 are cleaved as a signal peptide; the sequence is MHAIAGLTGLLAGVSLSYA. N-linked (GlcNAc...) asparagine glycosylation is found at Asn25, Asn72, and Asn259. Residue Asp287 is part of the active site. 7 N-linked (GlcNAc...) asparagine glycosylation sites follow: Asn315, Asn322, Asn394, Asn434, Asn472, Asn543, and Asn651.

This sequence belongs to the glycosyl hydrolase 3 family.

It is found in the secreted. The enzyme catalyses Hydrolysis of terminal, non-reducing beta-D-glucosyl residues with release of beta-D-glucose.. The protein operates within glycan metabolism; cellulose degradation. Functionally, beta-glucosidases are one of a number of cellulolytic enzymes involved in the degradation of cellulosic biomass. Catalyzes the last step releasing glucose from the inhibitory cellobiose. The chain is Probable beta-glucosidase M (bglM) from Aspergillus oryzae (strain ATCC 42149 / RIB 40) (Yellow koji mold).